We begin with the raw amino-acid sequence, 150 residues long: Viral late gene transcription factor 2 (150 aa).

The protein belongs to the chordopoxvirinae VLTF-2 family. As to quaternary structure, interacts with itself. Interacts with the late transcription factors VLTF-1.

Its function is as follows. Acts with RNA polymerase to initiate transcription from late gene promoters. The polypeptide is Viral late gene transcription factor 2 (VLTF2) (Homo sapiens (Human)).